We begin with the raw amino-acid sequence, 526 residues long: Triacylglycerol lipase OBL1 (526 aa).

A helical membrane pass occupies residues 79 to 99 (GHLTDFLLNFYYQNHGFLGIL). The GXSXG signature appears at 338 to 342 (GHSLG). Residue S340 is the Nucleophile of the active site. Residues D404 and H497 each act as charge relay system in the active site.

This sequence belongs to the AB hydrolase superfamily. Lipase family.

It localises to the membrane. It catalyses the reaction a triacylglycerol + H2O = a diacylglycerol + a fatty acid + H(+). Its function is as follows. Acid lipase that can hydrolyze a range of triacylglycerols but is not active on phospholipids. In vitro, hydrolyzes triolein, trilinolein, triricinolein, tripalmitin, trilaurin and tricaprin. May play a role in the regulation of lipolysis in germinating seeds. The chain is Triacylglycerol lipase OBL1 from Ricinus communis (Castor bean).